We begin with the raw amino-acid sequence, 196 residues long: Adenylyl-sulfate kinase (196 aa).

31–38 serves as a coordination point for ATP; that stretch reads GLSGAGKS. S105 acts as the Phosphoserine intermediate in catalysis.

It belongs to the APS kinase family.

The catalysed reaction is adenosine 5'-phosphosulfate + ATP = 3'-phosphoadenylyl sulfate + ADP + H(+). It participates in sulfur metabolism; hydrogen sulfide biosynthesis; sulfite from sulfate: step 2/3. In terms of biological role, catalyzes the synthesis of activated sulfate. In Aeromonas salmonicida (strain A449), this protein is Adenylyl-sulfate kinase.